Here is a 204-residue protein sequence, read N- to C-terminus: Large ribosomal subunit protein eL15 (204 aa).

The protein belongs to the eukaryotic ribosomal protein eL15 family. In terms of assembly, component of the large ribosomal subunit.

The protein resides in the cytoplasm. Its function is as follows. Component of the large ribosomal subunit. The ribosome is a large ribonucleoprotein complex responsible for the synthesis of proteins in the cell. The chain is Large ribosomal subunit protein eL15 (rpl15) from Silurus asotus (Amur catfish).